The chain runs to 427 residues: uncharacterized protein (427 aa).

Helical transmembrane passes span 10–30 (LAYL…AGFW), 43–63 (KIIS…SKLA), and 71–91 (IFEI…SFIS). Thr-199 carries the phosphothreonine modification. Ser-234 carries the post-translational modification Phosphoserine. 5 consecutive transmembrane segments (helical) span residues 253–273 (NLNP…IGPL), 288–308 (FAEA…VVLG), 327–347 (LLIG…LPII), 358–378 (ILDD…PPAI), and 397–417 (ILFW…VSGA).

The protein belongs to the auxin efflux carrier (TC 2.A.69) family.

The protein localises to the membrane. This is an uncharacterized protein from Saccharomyces cerevisiae (strain ATCC 204508 / S288c) (Baker's yeast).